The sequence spans 573 residues: Urease subunit alpha (573 aa).

The region spanning 136–573 (GAIDCHVHLI…LPMAQRYFLF (438 aa)) is the Urease domain. Ni(2+)-binding residues include H141, H143, and K224. N6-carboxylysine is present on K224. H226 is a substrate binding site. Ni(2+) is bound by residues H253 and H279. H327 (proton donor) is an active-site residue. A Ni(2+)-binding site is contributed by D367.

Belongs to the metallo-dependent hydrolases superfamily. Urease alpha subunit family. In terms of assembly, heterotrimer of UreA (gamma), UreB (beta) and UreC (alpha) subunits. Three heterotrimers associate to form the active enzyme. Ni cation is required as a cofactor. In terms of processing, carboxylation allows a single lysine to coordinate two nickel ions.

The protein localises to the cytoplasm. The enzyme catalyses urea + 2 H2O + H(+) = hydrogencarbonate + 2 NH4(+). Its pathway is nitrogen metabolism; urea degradation; CO(2) and NH(3) from urea (urease route): step 1/1. The protein is Urease subunit alpha of Mycolicibacterium vanbaalenii (strain DSM 7251 / JCM 13017 / BCRC 16820 / KCTC 9966 / NRRL B-24157 / PYR-1) (Mycobacterium vanbaalenii).